A 321-amino-acid polypeptide reads, in one-letter code: Solute carrier family 25 member 33 (321 aa).

3 Solcar repeats span residues 9–118, 126–213, and 231–315; these read ENTL…AKEQ, NSNI…LKKY, and TNFF…IVYL. Helical transmembrane passes span 12-32, 49-65, 121-141, 190-210, 233-253, and 298-318; these read LLHL…TCPL, VYYP…AGVV, GVFV…AAFV, LTAS…YESL, FFGL…VAYP, and QIPN…LLED.

It belongs to the mitochondrial carrier (TC 2.A.29) family.

The protein resides in the mitochondrion inner membrane. The enzyme catalyses UTP(in) + UDP(out) = UTP(out) + UDP(in). The catalysed reaction is dUTP(out) + UTP(in) = dUTP(in) + UTP(out). It catalyses the reaction 5-methyl-UTP(out) + UTP(in) = 5-methyl-UTP(in) + UTP(out). It carries out the reaction 5-methyl-UDP(out) + UTP(in) = 5-methyl-UDP(in) + UTP(out). The enzyme catalyses UTP(in) + CTP(out) = UTP(out) + CTP(in). The catalysed reaction is CDP(out) + UTP(in) = CDP(in) + UTP(out). It catalyses the reaction dCTP(out) + UTP(in) = dCTP(in) + UTP(out). It carries out the reaction dCDP(out) + UTP(in) = dCDP(in) + UTP(out). The enzyme catalyses UTP(in) + GTP(out) = UTP(out) + GTP(in). The catalysed reaction is UTP(in) + GDP(out) = UTP(out) + GDP(in). It catalyses the reaction dGTP(out) + UTP(in) = dGTP(in) + UTP(out). It carries out the reaction dGDP(out) + UTP(in) = dGDP(in) + UTP(out). The enzyme catalyses ITP(out) + UTP(in) = ITP(in) + UTP(out). Its function is as follows. Mitochondrial transporter that imports/exports pyrimidine nucleotides into and from mitochondria. Selectively transports uridine, thymidine, guanosine, cytosine and inosine (deoxy)nucleoside di- and triphosphates by an antiport mechanism. May import (deoxy)nucleoside triphosphates in exchange for intramitochondrial (deoxy)nucleoside diphosphates, thus providing precursors necessary for de novo synthesis of mitochondrial DNA and RNA while exporting products of their catabolism. Participates in mitochondrial genome maintenance, regulation of mitochondrial membrane potential and mitochondrial respiration. Upon INS or IGF1 stimulation regulates cell growth and proliferation by controlling mitochondrial DNA replication and transcription, the ratio of mitochondria-to nuclear-encoded components of the electron transport chain resulting in control of mitochondrial ROS production. Participates in dendritic cell endocytosis and may associate with mitochondrial oxidative phosphorylation. This Bos taurus (Bovine) protein is Solute carrier family 25 member 33 (SLC25A33).